Here is an 88-residue protein sequence, read N- to C-terminus: Insertion element ISR1 uncharacterized 10 kDa protein A3 (88 aa).

The protein belongs to the transposase 8 family.

The protein is Insertion element ISR1 uncharacterized 10 kDa protein A3 of Rhizobium sp.